The following is a 294-amino-acid chain: Proteasome subunit beta (294 aa).

Positions 1–65 are cleaved as a propeptide — removed in mature form; by autocatalysis; it reads MTADRPALRT…MESGDLAPHG (65 aa). The Nucleophile role is filled by Thr66.

Belongs to the peptidase T1B family. In terms of assembly, the 20S proteasome core is composed of 14 alpha and 14 beta subunits that assemble into four stacked heptameric rings, resulting in a barrel-shaped structure. The two inner rings, each composed of seven catalytic beta subunits, are sandwiched by two outer rings, each composed of seven alpha subunits. The catalytic chamber with the active sites is on the inside of the barrel. Has a gated structure, the ends of the cylinder being occluded by the N-termini of the alpha-subunits. Is capped by the proteasome-associated ATPase, ARC.

The protein localises to the cytoplasm. It carries out the reaction Cleavage of peptide bonds with very broad specificity.. The protein operates within protein degradation; proteasomal Pup-dependent pathway. With respect to regulation, the formation of the proteasomal ATPase ARC-20S proteasome complex, likely via the docking of the C-termini of ARC into the intersubunit pockets in the alpha-rings, may trigger opening of the gate for substrate entry. Interconversion between the open-gate and close-gate conformations leads to a dynamic regulation of the 20S proteasome proteolysis activity. Component of the proteasome core, a large protease complex with broad specificity involved in protein degradation. In Rhodococcus jostii (strain RHA1), this protein is Proteasome subunit beta.